A 183-amino-acid chain; its full sequence is UPF0200 protein MmarC7_0527 (183 aa).

8–15 (GMPGSGKS) is a binding site for ATP.

Belongs to the UPF0200 family.

This chain is UPF0200 protein MmarC7_0527, found in Methanococcus maripaludis (strain C7 / ATCC BAA-1331).